A 96-amino-acid polypeptide reads, in one-letter code: Citrate lyase acyl carrier protein (96 aa).

O-(phosphoribosyl dephospho-coenzyme A)serine is present on S14.

Belongs to the CitD family. In terms of assembly, oligomer with a subunit composition of (alpha,beta,gamma)6.

It localises to the cytoplasm. Functionally, covalent carrier of the coenzyme of citrate lyase. This Pectobacterium carotovorum subsp. carotovorum (strain PC1) protein is Citrate lyase acyl carrier protein.